A 415-amino-acid chain; its full sequence is Multifunctional CCA protein (415 aa).

Residues G8 and R11 each contribute to the ATP site. The CTP site is built by G8 and R11. Mg(2+) is bound by residues D21 and D23. The ATP site is built by R91, R143, and R146. Residues R91, R143, and R146 each coordinate CTP. The region spanning 232-333 (TGVHVMMVID…VRLLERCDAL (102 aa)) is the HD domain.

The protein belongs to the tRNA nucleotidyltransferase/poly(A) polymerase family. Bacterial CCA-adding enzyme type 1 subfamily. Monomer. Can also form homodimers and oligomers. Mg(2+) is required as a cofactor. The cofactor is Ni(2+).

The enzyme catalyses a tRNA precursor + 2 CTP + ATP = a tRNA with a 3' CCA end + 3 diphosphate. It carries out the reaction a tRNA with a 3' CCA end + 2 CTP + ATP = a tRNA with a 3' CCACCA end + 3 diphosphate. Its function is as follows. Catalyzes the addition and repair of the essential 3'-terminal CCA sequence in tRNAs without using a nucleic acid template. Adds these three nucleotides in the order of C, C, and A to the tRNA nucleotide-73, using CTP and ATP as substrates and producing inorganic pyrophosphate. tRNA 3'-terminal CCA addition is required both for tRNA processing and repair. Also involved in tRNA surveillance by mediating tandem CCA addition to generate a CCACCA at the 3' terminus of unstable tRNAs. While stable tRNAs receive only 3'-terminal CCA, unstable tRNAs are marked with CCACCA and rapidly degraded. The polypeptide is Multifunctional CCA protein (Cupriavidus taiwanensis (strain DSM 17343 / BCRC 17206 / CCUG 44338 / CIP 107171 / LMG 19424 / R1) (Ralstonia taiwanensis (strain LMG 19424))).